A 613-amino-acid polypeptide reads, in one-letter code: AP-5 complex subunit mu (613 aa).

The MHD domain occupies 309–563 (KQRLLFTIHE…DYAKVSFKIV (255 aa)). A disordered region spans residues 501–522 (SPLQSRRKGDGDDEESEDESAE). Acidic residues predominate over residues 511-521 (GDDEESEDESA).

Belongs to the adaptor complexes medium subunit family. Probably part of the adaptor protein complex 5 (AP-5).

The protein localises to the cytoplasmic vesicle membrane. The polypeptide is AP-5 complex subunit mu (AP5M) (Arabidopsis thaliana (Mouse-ear cress)).